The chain runs to 273 residues: Acetyl-coenzyme A carboxylase carboxyl transferase subunit alpha (273 aa).

A CoA carboxyltransferase C-terminal domain is found at 1-244 (MKKATQSKAW…KVVLKQALDE (244 aa)).

It belongs to the AccA family. In terms of assembly, acetyl-CoA carboxylase is a heterohexamer composed of biotin carboxyl carrier protein (AccB), biotin carboxylase (AccC) and two subunits each of ACCase subunit alpha (AccA) and ACCase subunit beta (AccD).

It is found in the cytoplasm. The catalysed reaction is N(6)-carboxybiotinyl-L-lysyl-[protein] + acetyl-CoA = N(6)-biotinyl-L-lysyl-[protein] + malonyl-CoA. It functions in the pathway lipid metabolism; malonyl-CoA biosynthesis; malonyl-CoA from acetyl-CoA: step 1/1. Component of the acetyl coenzyme A carboxylase (ACC) complex. First, biotin carboxylase catalyzes the carboxylation of biotin on its carrier protein (BCCP) and then the CO(2) group is transferred by the carboxyltransferase to acetyl-CoA to form malonyl-CoA. In Acinetobacter baumannii (strain AB0057), this protein is Acetyl-coenzyme A carboxylase carboxyl transferase subunit alpha.